The following is an 86-amino-acid chain: DNA-directed RNA polymerase subunit omega (86 aa).

This sequence belongs to the RNA polymerase subunit omega family. As to quaternary structure, the RNAP catalytic core consists of 2 alpha, 1 beta, 1 beta' and 1 omega subunit. When a sigma factor is associated with the core the holoenzyme is formed, which can initiate transcription.

It carries out the reaction RNA(n) + a ribonucleoside 5'-triphosphate = RNA(n+1) + diphosphate. In terms of biological role, promotes RNA polymerase assembly. Latches the N- and C-terminal regions of the beta' subunit thereby facilitating its interaction with the beta and alpha subunits. The sequence is that of DNA-directed RNA polymerase subunit omega from Psychrobacter sp. (strain PRwf-1).